Consider the following 201-residue polypeptide: dCTP deaminase, dUMP-forming (201 aa).

Residues 101-106 (KSSLGR), D119, 127-129 (TLE), Q148, Y162, and Q174 contribute to the dCTP site. Catalysis depends on E129, which acts as the Proton donor/acceptor. Positions 166–183 (EYSSRYQGQRGPTASRSF) are enriched in polar residues. The disordered stretch occupies residues 166 to 201 (EYSSRYQGQRGPTASRSFLNFHRTDVSGTEAGRSSS).

This sequence belongs to the dCTP deaminase family. Homotrimer.

The enzyme catalyses dCTP + 2 H2O = dUMP + NH4(+) + diphosphate. It participates in pyrimidine metabolism; dUMP biosynthesis; dUMP from dCTP: step 1/1. Its function is as follows. Bifunctional enzyme that catalyzes both the deamination of dCTP to dUTP and the hydrolysis of dUTP to dUMP without releasing the toxic dUTP intermediate. In Leifsonia xyli subsp. xyli (strain CTCB07), this protein is dCTP deaminase, dUMP-forming.